Here is a 278-residue protein sequence, read N- to C-terminus: Ribosomal RNA small subunit methyltransferase A (278 aa).

Positions 28, 30, 55, 77, 103, and 122 each coordinate S-adenosyl-L-methionine.

It belongs to the class I-like SAM-binding methyltransferase superfamily. rRNA adenine N(6)-methyltransferase family. RsmA subfamily.

Its subcellular location is the cytoplasm. It carries out the reaction adenosine(1518)/adenosine(1519) in 16S rRNA + 4 S-adenosyl-L-methionine = N(6)-dimethyladenosine(1518)/N(6)-dimethyladenosine(1519) in 16S rRNA + 4 S-adenosyl-L-homocysteine + 4 H(+). Functionally, specifically dimethylates two adjacent adenosines (A1518 and A1519) in the loop of a conserved hairpin near the 3'-end of 16S rRNA in the 30S particle. May play a critical role in biogenesis of 30S subunits. This is Ribosomal RNA small subunit methyltransferase A from Cereibacter sphaeroides (strain ATCC 17029 / ATH 2.4.9) (Rhodobacter sphaeroides).